Here is a 254-residue protein sequence, read N- to C-terminus: MRLLLDLGNSAIKWAVVPPGGAAWQTGRLAYADGAGPEDTAAALGGRIPSTVAPARICVASVLAPAWQRRFDTALERAWGGPVQHLVASAAAAGVTNGYDQPEQLGVDRWAALIGARAVAPEGACIVDVGTAITVDGLDADGRHLGGAIFPGARLLHQALARGTARLPDSPIGAAALPARSTEEGIAAGVAVGAGAAVTALADAILAACPPGAQRLITGGGGGELAAGLSPAWCHRPYLVLEGLLHWSRHEARR.

6–13 (DLGNSAIK) provides a ligand contact to ATP. Substrate contacts are provided by residues Tyr-99 and 106–109 (GVDR). Asp-108 acts as the Proton acceptor in catalysis. Residue Asp-128 participates in K(+) binding. Residue Thr-131 coordinates ATP. Thr-182 provides a ligand contact to substrate.

This sequence belongs to the type III pantothenate kinase family. As to quaternary structure, homodimer. The cofactor is NH4(+). Requires K(+) as cofactor.

It is found in the cytoplasm. It catalyses the reaction (R)-pantothenate + ATP = (R)-4'-phosphopantothenate + ADP + H(+). The protein operates within cofactor biosynthesis; coenzyme A biosynthesis; CoA from (R)-pantothenate: step 1/5. In terms of biological role, catalyzes the phosphorylation of pantothenate (Pan), the first step in CoA biosynthesis. This chain is Type III pantothenate kinase, found in Halorhodospira halophila (strain DSM 244 / SL1) (Ectothiorhodospira halophila (strain DSM 244 / SL1)).